Reading from the N-terminus, the 174-residue chain is Endoribonuclease YbeY (174 aa).

Zn(2+) contacts are provided by His-129, His-133, and His-139.

The protein belongs to the endoribonuclease YbeY family. Zn(2+) is required as a cofactor.

It localises to the cytoplasm. Single strand-specific metallo-endoribonuclease involved in late-stage 70S ribosome quality control and in maturation of the 3' terminus of the 16S rRNA. In Lactobacillus helveticus (strain DPC 4571), this protein is Endoribonuclease YbeY.